The following is a 322-amino-acid chain: Undecaprenyl-phosphate 4-deoxy-4-formamido-L-arabinose transferase (322 aa).

At 1-235 (MFEIHPVKKV…TCLTTTPLRM (235 aa)) the chain is on the cytoplasmic side. The helical transmembrane segment at 236-256 (LSLLGSIIAIGGFSIAVLLVI) threads the bilayer. The Periplasmic segment spans residues 257 to 269 (LRLTFGPQWAAEG). The helical transmembrane segment at 270–290 (VFMLFAVLFTFIGAQFIGMGL) threads the bilayer. The Cytoplasmic portion of the chain corresponds to 291–322 (LGEYIGRIYTDVRARPRYFVQQVIRPSSKENE).

This sequence belongs to the glycosyltransferase 2 family.

The protein resides in the cell inner membrane. The enzyme catalyses UDP-4-deoxy-4-formamido-beta-L-arabinose + di-trans,octa-cis-undecaprenyl phosphate = 4-deoxy-4-formamido-alpha-L-arabinopyranosyl di-trans,octa-cis-undecaprenyl phosphate + UDP. It functions in the pathway glycolipid biosynthesis; 4-amino-4-deoxy-alpha-L-arabinose undecaprenyl phosphate biosynthesis; 4-amino-4-deoxy-alpha-L-arabinose undecaprenyl phosphate from UDP-4-deoxy-4-formamido-beta-L-arabinose and undecaprenyl phosphate: step 1/2. It participates in bacterial outer membrane biogenesis; lipopolysaccharide biosynthesis. Its function is as follows. Catalyzes the transfer of 4-deoxy-4-formamido-L-arabinose from UDP to undecaprenyl phosphate. The modified arabinose is attached to lipid A and is required for resistance to polymyxin and cationic antimicrobial peptides. This chain is Undecaprenyl-phosphate 4-deoxy-4-formamido-L-arabinose transferase, found in Escherichia coli O45:K1 (strain S88 / ExPEC).